Reading from the N-terminus, the 297-residue chain is Putative S-adenosyl-L-methionine-dependent methyltransferase Mmcs_1044 (297 aa).

S-adenosyl-L-methionine contacts are provided by residues aspartate 124 and 153–154 (DL).

Belongs to the UPF0677 family.

Its function is as follows. Exhibits S-adenosyl-L-methionine-dependent methyltransferase activity. This Mycobacterium sp. (strain MCS) protein is Putative S-adenosyl-L-methionine-dependent methyltransferase Mmcs_1044.